The primary structure comprises 373 residues: 3 beta-hydroxysteroid dehydrogenase/Delta 5--&gt;4-isomerase type 2 (373 aa).

Y155 acts as the Proton acceptor in catalysis. Position 159 (K159) interacts with NAD(+). A helical transmembrane segment spans residues V288–V308.

It belongs to the 3-beta-HSD family. As to expression, high levels in adrenal gland, kidney and male liver. Low levels in female liver.

The protein localises to the endoplasmic reticulum membrane. Its subcellular location is the mitochondrion membrane. The enzyme catalyses a 3beta-hydroxy-Delta(5)-steroid + NAD(+) = a 3-oxo-Delta(5)-steroid + NADH + H(+). It carries out the reaction a 3-oxo-Delta(5)-steroid = a 3-oxo-Delta(4)-steroid. The catalysed reaction is pregnenolone + NAD(+) = pregn-5-ene-3,20-dione + NADH + H(+). It catalyses the reaction pregn-5-ene-3,20-dione = progesterone. The enzyme catalyses 3beta-hydroxyandrost-5-en-17-one + NAD(+) = androst-5-ene-3,17-dione + NADH + H(+). It carries out the reaction androst-5-ene-3,17-dione = androst-4-ene-3,17-dione. It participates in lipid metabolism; steroid biosynthesis. Its function is as follows. 3-beta-HSD is a bifunctional enzyme, that catalyzes the oxidative conversion of Delta(5)-ene-3-beta-hydroxy steroid, and the oxidative conversion of ketosteroids. The 3-beta-HSD enzymatic system plays a crucial role in the biosynthesis of all classes of hormonal steroids. The sequence is that of 3 beta-hydroxysteroid dehydrogenase/Delta 5--&gt;4-isomerase type 2 (HSD3B2) from Mesocricetus auratus (Golden hamster).